Consider the following 453-residue polypeptide: MGVLGRVLLWLQLCALTQAVSKLWVPNTDFDVAANWSQNRTPCAGGAVEFPADKMVSVLVQEGHAVSDMLLPLDGELVLASGAGFGVSDVGSHLDCGAGEPAVFRDSDRFSWHDPHLWRSGDEAPGLFFVDAERVPCRHDDVFFPPSASFRVGLGPGASPVRVRSISALGRTFTRDEDLAVFLASRAGRLRFHGPGALSVGPEDCADPSGCVCGNAEAQPWICAALLQPLGGRCPQAACHSALRPQGQCCDLCGAVVLLTHGPAFDLERYRARILDTFLGLPQYHGLQVAVSKVPRSSRLREADTEIQVVLVENGPETGGAGRLARALLADVAENGEALGVLEATMRESGAHVWGSSAAGLAGGVAAAVLLALLVLLVAPPLLRRAGRLRWRRHEAAAPAGAPLGFRNPVFDVTASEELPLPRRLSLVPKAAADSTSHSYFVNPLFAGAEAEA.

The signal sequence occupies residues 1 to 19 (MGVLGRVLLWLQLCALTQA). Residues 20-357 (VSKLWVPNTD…ESGAHVWGSS (338 aa)) lie on the Extracellular side of the membrane. Asn35 is a glycosylation site (N-linked (GlcNAc...) asparagine). 6 disulfides stabilise this stretch: Cys43-Cys96, Cys137-Cys213, Cys205-Cys211, Cys223-Cys249, Cys234-Cys250, and Cys239-Cys253. The interaction with CUBN stretch occupies residues 67 to 87 (SDMLLPLDGELVLASGAGFGV). The 53-residue stretch at 202–254 (PEDCADPSGCVCGNAEAQPWICAALLQPLGGRCPQAACHSALRPQGQCCDLCG) folds into the VWFC domain. The helical transmembrane segment at 358–378 (AAGLAGGVAAAVLLALLVLLV) threads the bilayer. Residues 379–453 (APPLLRRAGR…PLFAGAEAEA (75 aa)) lie on the Cytoplasmic side of the membrane.

In terms of assembly, interacts (via extracellular region) with CUBN/cubilin, giving rise to a huge complex containing one AMN chain and three CUBN chains. In terms of processing, N-glycosylated. Post-translationally, a soluble form arises by proteolytic removal of the membrane anchor. Detected in proximal tubules in the kidney cortex (at protein level). Long isoforms are highly expressed in small intestine, colon and kidney (renal proximal tubule epithelial cells). Shorter isoforms are detected at lower levels in testis, thymus and peripheral blood leukocytes.

Its subcellular location is the apical cell membrane. The protein resides in the cell membrane. It is found in the endosome membrane. It localises to the membrane. The protein localises to the coated pit. Its subcellular location is the secreted. Membrane-bound component of the endocytic receptor formed by AMN and CUBN. Required for normal CUBN glycosylation and trafficking to the cell surface. The complex formed by AMN and CUBN is required for efficient absorption of vitamin B12. Required for normal CUBN-mediated protein transport in the kidney. This is Protein amnionless (AMN) from Homo sapiens (Human).